Here is an 851-residue protein sequence, read N- to C-terminus: MRAREIQRNWQHLGKRGILFLGILIICSAANNLWVTVYYGVPVWKEATTTLFCASDAKAYETEVHNVWATHACVPTDPNPQEVVLENVTENFNMWKNNMVEQMHTDIISLWDESLKPCVKLTPLCVTLTCTNVTNNRTNANKNDTNINATVTSTDEIKNCSFNITTELKDKKKRVSALFYKLDIVQIKQSEINQSESEDRLINCNTSTVTQACPKVSFEPIPIHYCAPAGFAILKCNNNTCNGTGPCTNVSTVQCTHGIKPVVSTQLLLNGSLAEEEIIIRSEDITKNTKNIIVQLNEAVEINCTRPSNNTRKSIHIGPGRAFYATGDIIGDIRQAHCNISGGQWNKTVNQVKKELGKHFNKTIIFQPSSGGDPQVTRHIFNCRGEFSYCDTTDTVDDTEEEEDTTITIPCRIKQIINMWQKVGQAIYAPPTAGNITCRSNITGMILTRDGGNDNNTRTEETFRPGGGDMRDNWRSELYKYKVVQIEPLGIAPTRARRRVVQREKRAVGIGALFLGFLGAAGSTMGAASITLTVQARQLLSGIVQQQNNLLRAIEAQQQMLQLTVWGIKQLRARVLAVERYLRDQQLLGIWGCSGKLICTTNVPWNSSWSNKSQSEIWENMTWMQWEKEISNHTSTIYRLIEESQIQQEKNEQDLLALDKWASLWNWFDISNWLWYIKIFIMIVGGLIGLRIVFTVLSVVNRVRQGYSPLSFQTLTPSPRGPDRPEGIEEGGGEQDKDRSVRLVSGFLALAWDDLRNLCLFSYRHLRDLVLIATRILDRGLKGSWEALKYLWNLILYWGQEIKNSAINLLNTTAIAVAEGTDRIIEIVYRAFRALLHIPRRIRQGFERLLL.

An N-terminal signal peptide occupies residues 1–31; it reads MRAREIQRNWQHLGKRGILFLGILIICSAAN. The Extracellular portion of the chain corresponds to 32-679; sequence NLWVTVYYGV…ISNWLWYIKI (648 aa). A disulfide bond links Cys53 and Cys73. N-linked (GlcNAc...) asparagine; by host glycosylation is found at Asn87, Asn132, Asn136, Asn143, Asn148, Asn159, Asn163, Asn193, Asn205, Asn238, Asn242, Asn249, Asn270, Asn303, Asn309, Asn339, Asn346, and Asn361. 5 disulfides stabilise this stretch: Cys118/Cys213, Cys125/Cys204, Cys130/Cys160, Cys226/Cys255, and Cys236/Cys247. The V1 stretch occupies residues 130-159; sequence CTNVTNNRTNANKNDTNINATVTSTDEIKN. Residues 160-204 are V2; sequence CSFNITTELKDKKKRVSALFYKLDIVQIKQSEINQSESEDRLINC. A V3 region spans residues 304–337; that stretch reads CTRPSNNTRKSIHIGPGRAFYATGDIIGDIRQAH. A disulfide bridge connects residues Cys304 and Cys338. Residues 369-379 are CD4-binding loop; the sequence is SSGGDPQVTRH. Disulfide bonds link Cys383–Cys438 and Cys390–Cys411. The V4 stretch occupies residues 390–411; the sequence is CDTTDTVDDTEEEEDTTITIPC. N-linked (GlcNAc...) asparagine; by host glycans are attached at residues Asn435, Asn441, and Asn455. The disordered stretch occupies residues 449–469; that stretch reads RDGGNDNNTRTEETFRPGGGD. 2 V5 regions span residues 454–466 and 456–466; these read DNNT…FRPG and NTRTEETFRPG. The segment covering 457 to 469 has biased composition (basic and acidic residues); sequence TRTEETFRPGGGD. The interval 507–527 is fusion peptide; the sequence is AVGIGALFLGFLGAAGSTMGA. The interval 569 to 587 is immunosuppression; that stretch reads KQLRARVLAVERYLRDQQL. Cysteines 593 and 599 form a disulfide. Residues Asn606, Asn611, Asn620, and Asn632 are each glycosylated (N-linked (GlcNAc...) asparagine; by host). Residues 628–662 adopt a coiled-coil conformation; the sequence is KEISNHTSTIYRLIEESQIQQEKNEQDLLALDKWA. Positions 657 to 678 are MPER; binding to GalCer; that stretch reads ALDKWASLWNWFDISNWLWYIK. Residues 680–700 traverse the membrane as a helical segment; that stretch reads FIMIVGGLIGLRIVFTVLSVV. At 701 to 851 the chain is on the cytoplasmic side; sequence NRVRQGYSPL…IRQGFERLLL (151 aa). The short motif at 707 to 710 is the YXXL motif; contains endocytosis signal element; sequence YSPL. The tract at residues 713–737 is disordered; sequence QTLTPSPRGPDRPEGIEEGGGEQDK. Cys759 carries the S-palmitoyl cysteine; by host lipid modification. The Di-leucine internalization motif signature appears at 850-851; the sequence is LL.

This sequence belongs to the HIV-1 env protein family. In terms of assembly, the mature envelope protein (Env) consists of a homotrimer of non-covalently associated gp120-gp41 heterodimers. The resulting complex protrudes from the virus surface as a spike. There seems to be as few as 10 spikes on the average virion. Interacts with host CD4, CCR5 and CXCR4. Gp120 also interacts with the C-type lectins CD209/DC-SIGN and CLEC4M/DC-SIGNR (collectively referred to as DC-SIGN(R)). Gp120 and gp41 interact with GalCer. Gp120 interacts with host ITGA4/ITGB7 complex; on CD4+ T-cells, this interaction results in rapid activation of integrin ITGAL/LFA-1, which facilitates efficient cell-to-cell spreading of HIV-1. Gp120 interacts with cell-associated heparan sulfate; this interaction increases virus infectivity on permissive cells and may be involved in infection of CD4- cells. As to quaternary structure, the mature envelope protein (Env) consists of a homotrimer of non-covalently associated gp120-gp41 heterodimers. The resulting complex protrudes from the virus surface as a spike. There seems to be as few as 10 spikes on the average virion. Highly glycosylated by host. The high number of glycan on the protein is reffered to as 'glycan shield' because it contributes to hide protein sequence from adaptive immune system. Post-translationally, palmitoylation of the transmembrane protein and of Env polyprotein (prior to its proteolytic cleavage) is essential for their association with host cell membrane lipid rafts. Palmitoylation is therefore required for envelope trafficking to classical lipid rafts, but not for viral replication. In terms of processing, specific enzymatic cleavages in vivo yield mature proteins. Envelope glycoproteins are synthesized as an inactive precursor that is heavily N-glycosylated and processed likely by host cell furin in the Golgi to yield the mature SU and TM proteins. The cleavage site between SU and TM requires the minimal sequence [KR]-X-[KR]-R. About 2 of the 9 disulfide bonds of gp41 are reduced by P4HB/PDI, following binding to CD4 receptor.

The protein resides in the virion membrane. It is found in the host cell membrane. The protein localises to the host endosome membrane. Functionally, oligomerizes in the host endoplasmic reticulum into predominantly trimers. In a second time, gp160 transits in the host Golgi, where glycosylation is completed. The precursor is then proteolytically cleaved in the trans-Golgi and thereby activated by cellular furin or furin-like proteases to produce gp120 and gp41. In terms of biological role, attaches the virus to the host lymphoid cell by binding to the primary receptor CD4. This interaction induces a structural rearrangement creating a high affinity binding site for a chemokine coreceptor like CXCR4 and/or CCR5. Acts as a ligand for CD209/DC-SIGN and CLEC4M/DC-SIGNR, which are respectively found on dendritic cells (DCs), and on endothelial cells of liver sinusoids and lymph node sinuses. These interactions allow capture of viral particles at mucosal surfaces by these cells and subsequent transmission to permissive cells. HIV subverts the migration properties of dendritic cells to gain access to CD4+ T-cells in lymph nodes. Virus transmission to permissive T-cells occurs either in trans (without DCs infection, through viral capture and transmission), or in cis (following DCs productive infection, through the usual CD4-gp120 interaction), thereby inducing a robust infection. In trans infection, bound virions remain infectious over days and it is proposed that they are not degraded, but protected in non-lysosomal acidic organelles within the DCs close to the cell membrane thus contributing to the viral infectious potential during DCs' migration from the periphery to the lymphoid tissues. On arrival at lymphoid tissues, intact virions recycle back to DCs' cell surface allowing virus transmission to CD4+ T-cells. Acts as a class I viral fusion protein. Under the current model, the protein has at least 3 conformational states: pre-fusion native state, pre-hairpin intermediate state, and post-fusion hairpin state. During fusion of viral and target intracellular membranes, the coiled coil regions (heptad repeats) assume a trimer-of-hairpins structure, positioning the fusion peptide in close proximity to the C-terminal region of the ectodomain. The formation of this structure appears to drive apposition and subsequent fusion of viral and target cell membranes. Complete fusion occurs in host cell endosomes and is dynamin-dependent, however some lipid transfer might occur at the plasma membrane. The virus undergoes clathrin-dependent internalization long before endosomal fusion, thus minimizing the surface exposure of conserved viral epitopes during fusion and reducing the efficacy of inhibitors targeting these epitopes. Membranes fusion leads to delivery of the nucleocapsid into the cytoplasm. This Homo sapiens (Human) protein is Envelope glycoprotein gp160.